Consider the following 342-residue polypeptide: Thymidylate synthase (342 aa).

Residues arginine 31 and 156–157 each bind dUMP; that span reads RR. The Nucleophile role is filled by cysteine 176. DUMP-binding positions include 196–199, asparagine 207, and 237–239; these read RSGD and HVY. Aspartate 199 contacts (6R)-5,10-methylene-5,6,7,8-tetrahydrofolate. Alanine 341 contributes to the (6R)-5,10-methylene-5,6,7,8-tetrahydrofolate binding site.

This sequence belongs to the thymidylate synthase family. Bacterial-type ThyA subfamily. Homodimer.

The protein resides in the cytoplasm. The catalysed reaction is dUMP + (6R)-5,10-methylene-5,6,7,8-tetrahydrofolate = 7,8-dihydrofolate + dTMP. It participates in pyrimidine metabolism; dTTP biosynthesis. In terms of biological role, catalyzes the reductive methylation of 2'-deoxyuridine-5'-monophosphate (dUMP) to 2'-deoxythymidine-5'-monophosphate (dTMP) while utilizing 5,10-methylenetetrahydrofolate (mTHF) as the methyl donor and reductant in the reaction, yielding dihydrofolate (DHF) as a by-product. This enzymatic reaction provides an intracellular de novo source of dTMP, an essential precursor for DNA biosynthesis. The chain is Thymidylate synthase from Haloferax volcanii (Halobacterium volcanii).